We begin with the raw amino-acid sequence, 348 residues long: Histidinol-phosphate aminotransferase (348 aa).

Position 207 is an N6-(pyridoxal phosphate)lysine (Lys207).

It belongs to the class-II pyridoxal-phosphate-dependent aminotransferase family. Histidinol-phosphate aminotransferase subfamily. Homodimer. It depends on pyridoxal 5'-phosphate as a cofactor.

It carries out the reaction L-histidinol phosphate + 2-oxoglutarate = 3-(imidazol-4-yl)-2-oxopropyl phosphate + L-glutamate. It participates in amino-acid biosynthesis; L-histidine biosynthesis; L-histidine from 5-phospho-alpha-D-ribose 1-diphosphate: step 7/9. This chain is Histidinol-phosphate aminotransferase, found in Rippkaea orientalis (strain PCC 8801 / RF-1) (Cyanothece sp. (strain PCC 8801)).